Here is a 396-residue protein sequence, read N- to C-terminus: Adenylyltransferase and sulfurtransferase UBA4 (396 aa).

Residues glycine 51, aspartate 72, 79–83, lysine 95, and 139–140 contribute to the ATP site; these read SNLHR and DG. Zn(2+) contacts are provided by cysteine 180 and cysteine 183. The active-site Glycyl thioester intermediate; for adenylyltransferase activity is cysteine 197. The Zn(2+) site is built by cysteine 257 and cysteine 260. In terms of domain architecture, Rhodanese spans 305-394; the sequence is VSTKHILLDV…WAKNVDEKFP (90 aa). The active-site Cysteine persulfide intermediate; for sulfurtransferase activity is the cysteine 355.

It in the N-terminal section; belongs to the HesA/MoeB/ThiF family. UBA4 subfamily. Zn(2+) serves as cofactor.

Its subcellular location is the cytoplasm. It is found in the cytosol. It participates in tRNA modification; 5-methoxycarbonylmethyl-2-thiouridine-tRNA biosynthesis. Its function is as follows. Plays a central role in 2-thiolation of mcm(5)S(2)U at tRNA wobble positions of cytosolic tRNA(Lys), tRNA(Glu) and tRNA(Gln). Acts by mediating the C-terminal thiocarboxylation of sulfur carrier URM1. Its N-terminus first activates URM1 as acyl-adenylate (-COAMP), then the persulfide sulfur on the catalytic cysteine is transferred to URM1 to form thiocarboxylation (-COSH) of its C-terminus. The reaction probably involves hydrogen sulfide that is generated from the persulfide intermediate and that acts as a nucleophile towards URM1. Subsequently, a transient disulfide bond is formed. Does not use thiosulfate as sulfur donor; NFS1 probably acting as a sulfur donor for thiocarboxylation reactions. Prior mcm(5) tRNA modification by the elongator complex is required for 2-thiolation. May also be involved in protein urmylation. This is Adenylyltransferase and sulfurtransferase UBA4 from Yarrowia lipolytica (strain CLIB 122 / E 150) (Yeast).